A 117-amino-acid chain; its full sequence is Large ribosomal subunit protein uL18 (117 aa).

This sequence belongs to the universal ribosomal protein uL18 family. Part of the 50S ribosomal subunit; part of the 5S rRNA/L5/L18/L25 subcomplex. Contacts the 5S and 23S rRNAs.

In terms of biological role, this is one of the proteins that bind and probably mediate the attachment of the 5S RNA into the large ribosomal subunit, where it forms part of the central protuberance. This chain is Large ribosomal subunit protein uL18, found in Onion yellows phytoplasma (strain OY-M).